The following is a 591-amino-acid chain: V-type ATP synthase alpha chain (591 aa).

An ATP-binding site is contributed by 233 to 240; the sequence is GPFGAGKT.

The protein belongs to the ATPase alpha/beta chains family.

The enzyme catalyses ATP + H2O + 4 H(+)(in) = ADP + phosphate + 5 H(+)(out). Functionally, produces ATP from ADP in the presence of a proton gradient across the membrane. The V-type alpha chain is a catalytic subunit. The sequence is that of V-type ATP synthase alpha chain from Streptococcus pyogenes serotype M2 (strain MGAS10270).